A 125-amino-acid polypeptide reads, in one-letter code: Inner membrane protein YbaN (125 aa).

Over 1–6 the chain is Cytoplasmic; the sequence is MQRIIL. Residues 7-26 form a helical membrane-spanning segment; sequence IIIGWLAVVLGTLGVVLPVL. Topologically, residues 27 to 45 are periplasmic; sequence PTTPFILLAAWCFARSSPR. A helical membrane pass occupies residues 46 to 63; sequence FHAWLLYRSWFGSYLRFW. Over 64-74 the chain is Cytoplasmic; the sequence is QKHHAMPRGVK. The helical transmembrane segment at 75 to 92 threads the bilayer; that stretch reads PRAILLILLTFAISLWFV. Residues 93–95 lie on the Periplasmic side of the membrane; the sequence is QMP. A helical membrane pass occupies residues 96-118; sequence WVRIMLLVILACLLFYMWRIPVI. Residues 119–125 are Cytoplasmic-facing; sequence DEKQEKH.

It is found in the cell inner membrane. This Escherichia coli O157:H7 protein is Inner membrane protein YbaN (ybaN).